The chain runs to 729 residues: Neurochondrin (729 aa).

Serine 2 bears the N-acetylserine mark. Serine 2 bears the Phosphoserine mark. S-palmitoyl cysteine attachment occurs at residues cysteine 3 and cysteine 4. Arginine 75 bears the Asymmetric dimethylarginine mark. Serine 448 bears the Phosphoserine mark.

Belongs to the neurochondrin family. As to quaternary structure, interacts with MCHR1. Interacts with SEMA4C. Interacts with DIAPH1 (via FH3 domain). Interacts with GRM5. Post-translationally, palmitoylated. Palmitoylation by ZDHHC1, ZDHHC3 and ZDHHC11 regulates the association of NCDN with endosome membranes. May also be palmitoylated by ZDHHC7. As to expression, expressed in the neuronal, chondral and bone tissues. Expressed in dendrites. Enriched in the brain in the surface layer I-IV. In brains, protein level increases in male but decreases in female with advancing age (at protein level). In adult brains, it is highly expressed in the forebrain and hindbrain. Highly expressed in the hippocampus, piriform cortex, septum, amygdaloid complex, medial geniculate nucleus, inferior colliculus, cerebellar nuclei and the nuclei of the Vth, VIIth, and XIIth cranial nerves. In bone tissues, it is expressed in osteoblasts and osteocytes.

The protein resides in the cytoplasm. The protein localises to the cytosol. Its subcellular location is the endosome membrane. It localises to the cell projection. It is found in the dendrite. The protein resides in the postsynapse. Its function is as follows. Probably involved in signal transduction, in the nervous system, via increasing cell surface localization of GRM5 and positively regulating its signaling. Required for the spatial learning process. Acts as a negative regulator of Ca(2+)-calmodulin-dependent protein kinase 2 (CaMK2) phosphorylation. May play a role in modulating melanin-concentrating hormone-mediated functions via its interaction with MCHR1 that interferes with G protein-coupled signal transduction. May be involved in bone metabolism. May also be involved in neurite outgrowth. In Mus musculus (Mouse), this protein is Neurochondrin (Ncdn).